The primary structure comprises 149 residues: Protein-export protein SecB (149 aa).

Belongs to the SecB family. Homotetramer, a dimer of dimers. One homotetramer interacts with 1 SecA dimer.

It localises to the cytoplasm. In terms of biological role, one of the proteins required for the normal export of preproteins out of the cell cytoplasm. It is a molecular chaperone that binds to a subset of precursor proteins, maintaining them in a translocation-competent state. It also specifically binds to its receptor SecA. This chain is Protein-export protein SecB, found in Hydrogenovibrio crunogenus (strain DSM 25203 / XCL-2) (Thiomicrospira crunogena).